Reading from the N-terminus, the 468-residue chain is FAD-linked oxidoreductase hasG (468 aa).

Residues 37–211 (LGKIPAAVVQ…VEATFRAYPW (175 aa)) enclose the FAD-binding PCMH-type domain.

This sequence belongs to the oxygen-dependent FAD-linked oxidoreductase family. The cofactor is FAD.

It functions in the pathway secondary metabolite biosynthesis. Functionally, FAD-linked oxidoreductase; part of the gene cluster that mediates the biosynthesis of hexadehydro-astechrome (HAS), a tryptophan-derived iron(III)-complex that acts as a virulence factor in infected mice. Within the pathway, hasG converts the prenyl to a methylbutadienyl side chain. The HAS biosynthesis begins with the synthesis of a tethered Trp-Ala dipeptide by the NRPS hasD. The 7-dimethylallyltryptophan synthase hasE then catalyzes the prenylation of the hasD-tethered tryptophan or the resulting tethered Trp-Ala dipeptide at the C-7 position of the indole moiety. HAS biosynthesis continues via tethered intermediates with the succesive actions of the cytochrome P450 monooxygenase hasH, the O-methyltransferase hasC, and the FAD-linked oxidoreductase hasG. The resulting O-methylated diketopiperazine is then released from hasD. Finally, three O-methylated diketopiperazine molecules assemble in a trimeric complex with Fe(III) to produce hexadehydro-astechrome. The polypeptide is FAD-linked oxidoreductase hasG (Aspergillus fumigatus (strain CBS 144.89 / FGSC A1163 / CEA10) (Neosartorya fumigata)).